Reading from the N-terminus, the 554-residue chain is Beta-eudesmol synthase (554 aa).

Mg(2+) contacts are provided by Asp-305, Asp-309, and Glu-456. A DDXXD motif motif is present at residues 305 to 309; that stretch reads DDIYD.

This sequence belongs to the terpene synthase family. The cofactor is Mg(2+). Mn(2+) serves as cofactor. In terms of tissue distribution, expressed in rhizomes. Detected in stems, but not in leaves.

It is found in the cytoplasm. The enzyme catalyses (2E,6E)-farnesyl diphosphate + H2O = beta-eudesmol + diphosphate. It catalyses the reaction (2E,6E)-farnesyl diphosphate + H2O = 10-epi-gamma-eudesmol + diphosphate. The catalysed reaction is (2E,6E)-farnesyl diphosphate + H2O = alpha-eudesmol + diphosphate. It functions in the pathway secondary metabolite biosynthesis; terpenoid biosynthesis. In terms of biological role, involved in the biosynthesis of beta-eudesmol, a sesquiterpene with antifungal activity and responsible for resistance of plants to ant attack. Produces mainly beta-eudesmol, but also smaller amounts of 10-epi-gamma-eudesmol, alpha-eudesmol and aristolene. This Zingiber zerumbet (Shampoo ginger) protein is Beta-eudesmol synthase (ZSS2).